Reading from the N-terminus, the 186-residue chain is Single-stranded DNA-binding protein 1 (186 aa).

Residues 1–108 (MDATVTVVGN…LEIDEIGPTL (108 aa)) enclose the SSB domain. The interval 119–186 (TQAGHGVSPD…EDFDSDEVPF (68 aa)) is disordered. Residues 175-186 (SYEDFDSDEVPF) show a composition bias toward acidic residues.

In terms of assembly, homotetramer.

In Tropheryma whipplei (strain Twist) (Whipple's bacillus), this protein is Single-stranded DNA-binding protein 1 (ssb1).